The chain runs to 295 residues: (R)-phenoxypropionate/alpha-ketoglutarate-dioxygenase (295 aa).

Fe cation contacts are provided by histidine 111 and aspartate 113. Threonine 138 and tryptophan 255 together coordinate 2-oxoglutarate. Histidine 270 is a Fe cation binding site. Arginine 281 is a 2-oxoglutarate binding site.

The protein belongs to the TfdA dioxygenase family. As to quaternary structure, homotrimer. Fe cation is required as a cofactor. L-ascorbate serves as cofactor.

It catalyses the reaction (R)-2-(4-chloro-2-methylphenoxy)propanoate + 2-oxoglutarate + O2 = 2-methyl-4-chlorophenol + pyruvate + succinate + CO2. It carries out the reaction (R)-(2,4-dichlorophenoxy)propanoate + 2-oxoglutarate + O2 = 2,4-dichlorophenol + pyruvate + succinate + CO2. It functions in the pathway xenobiotic degradation; 2-(2,4-dichlorophenoxy)propanoate degradation. Its activity is regulated as follows. Inhibited by divalent cations, most significantly by copper and nickel, and by diethylpyrocarbonate (DEPC). In terms of biological role, involved in the degradation of the phenoxypropionate herbicides. Catalyzes the enantiospecific cleavage of the ether bond in the herbicid R-dichlorprop ((R)-2-(2,4-dichlorophenoxy)propionate)(R-2,4-DP) and R-mecoprop ((R)-2-(4-chloro-2-methylphenoxy)propionate)(R-2,4-MCPP). It can also accept (RS)-2-(2,4,5-trichlorophenoxy)propionate, (RS)-2-(4-chlorophenoxy)propionate, (RS)-2-(m-chlorophenoxy)propionate, however it can only accept 2-oxoglutarate as oxygen acceptor. This Delftia acidovorans (Pseudomonas acidovorans) protein is (R)-phenoxypropionate/alpha-ketoglutarate-dioxygenase.